An 802-amino-acid polypeptide reads, in one-letter code: ATP-dependent zinc metalloprotease FTSH 7, chloroplastic (802 aa).

The N-terminal 55 residues, 1-55 (MTTTFEFLQPRIHGFATCCSSNSLLYSKASRFFNDRCRVYRQNPNRFVSNSITLP), are a transit peptide targeting the chloroplast. Positions 87–117 (CQEDDQNESSSEEEESSQSTPAKSERKREKK) are disordered. Residues 88 to 102 (QEDDQNESSSEEEES) show a composition bias toward acidic residues. The next 2 membrane-spanning stretches (helical) occupy residues 134–154 (IIQA…MFVM) and 268–288 (GGFF…AGLI). 365–372 (GLPGTGKT) serves as a coordination point for ATP. Residue histidine 590 participates in Zn(2+) binding. Residue glutamate 591 is part of the active site. Histidine 594 and aspartate 673 together coordinate Zn(2+).

It in the N-terminal section; belongs to the AAA ATPase family. The protein in the C-terminal section; belongs to the peptidase M41 family. Zn(2+) is required as a cofactor.

It localises to the plastid. It is found in the chloroplast thylakoid membrane. Functionally, probable ATP-dependent zinc metallopeptidase. The chain is ATP-dependent zinc metalloprotease FTSH 7, chloroplastic (FTSH7) from Arabidopsis thaliana (Mouse-ear cress).